A 365-amino-acid chain; its full sequence is H-2 class I histocompatibility antigen, D-D alpha chain (365 aa).

Residues 1 to 24 form the signal peptide; the sequence is MGAMAPRTLLLLLAAALGPTQTRA. The tract at residues 25–114 is alpha-1; it reads GSHSLRYFVT…ALRYYNQSAG (90 aa). Residues 25 to 311 lie on the Extracellular side of the membrane; sequence GSHSLRYFVT…EPPSSTKTNT (287 aa). N-linked (GlcNAc...) asparagine glycosylation occurs at asparagine 110. The alpha-2 stretch occupies residues 115–206; sequence GSHTLQWMAG…KNGNATLLRT (92 aa). Cysteine 125 and cysteine 188 are joined by a disulfide. Residue asparagine 200 is glycosylated (N-linked (GlcNAc...) asparagine). The interval 207-298 is alpha-3; the sequence is DPPKAHVTHH…GLPEPLTLRW (92 aa). The 89-residue stretch at 209 to 297 folds into the Ig-like C1-type domain; sequence PKAHVTHHRR…EGLPEPLTLR (89 aa). Cysteine 227 and cysteine 283 form a disulfide bridge. Positions 299–311 are connecting peptide; that stretch reads GKEEPPSSTKTNT. Residues 312-334 traverse the membrane as a helical segment; the sequence is VIIAVPVVLGAVVILGAVMAFVM. Residues 335–365 are Cytoplasmic-facing; sequence KRRRNTGGKGGDYALAPGSQSSDMSLPDCKV. The interval 343-365 is disordered; it reads KGGDYALAPGSQSSDMSLPDCKV. Serine 356 and serine 359 each carry phosphoserine.

It belongs to the MHC class I family. In terms of assembly, heterodimer of an alpha chain and a beta chain (beta-2-microglobulin).

It is found in the membrane. In terms of biological role, involved in the presentation of foreign antigens to the immune system. This chain is H-2 class I histocompatibility antigen, D-D alpha chain (H2-D1), found in Mus musculus (Mouse).